We begin with the raw amino-acid sequence, 304 residues long: Proline dehydrogenase 2 (304 aa).

Residue K97 coordinates substrate. D131 is a catalytic residue. M132 and Q160 together coordinate FAD. Residue R181 is part of the active site. FAD-binding positions include 184 to 186 and 223 to 224; these read KGA and TH. Position 285–286 (285–286) interacts with substrate; sequence RR.

The protein belongs to the proline dehydrogenase family. Requires FAD as cofactor.

The catalysed reaction is L-proline + a quinone = (S)-1-pyrroline-5-carboxylate + a quinol + H(+). The protein operates within amino-acid degradation; L-proline degradation into L-glutamate; L-glutamate from L-proline: step 1/2. Its function is as follows. Converts proline to delta-1-pyrroline-5-carboxylate. This chain is Proline dehydrogenase 2, found in Bacillus subtilis subsp. natto.